Here is a 480-residue protein sequence, read N- to C-terminus: Uridine 5'-monophosphate synthase (480 aa).

An N-acetylalanine modification is found at Ala2. Residues 2–214 (AAADALLGSL…AFVAANPNDS (213 aa)) are OPRTase. Tyr37 is modified (phosphotyrosine). Ser214 carries the phosphoserine modification. Residues 215–220 (LPSVKK) are domain linker. The interval 221–480 (EPKELSFGAR…WEAYLSRLAV (260 aa)) is OMPdecase. Orotidine 5'-phosphate is bound at residue Ser257. UMP-binding positions include Ser257, Asp259, and 281–283 (KIH). Orotidine 5'-phosphate-binding positions include Lys281, Lys314, Asp317, Thr321, Ser372, 430-432 (QQY), and 450-451 (GR). Active-site for OMPdecase activity residues include Lys314 and Asp317. Residues Asp317, Thr321, Ser372, 430–432 (QQY), and 450–451 (GR) contribute to the UMP site.

In the N-terminal section; belongs to the purine/pyrimidine phosphoribosyltransferase family. The protein in the C-terminal section; belongs to the OMP decarboxylase family. As to quaternary structure, homodimer; dimerization is required for enzymatic activity.

The enzyme catalyses orotidine 5'-phosphate + diphosphate = orotate + 5-phospho-alpha-D-ribose 1-diphosphate. The catalysed reaction is orotidine 5'-phosphate + H(+) = UMP + CO2. Its pathway is pyrimidine metabolism; UMP biosynthesis via de novo pathway; UMP from orotate: step 1/2. It participates in pyrimidine metabolism; UMP biosynthesis via de novo pathway; UMP from orotate: step 2/2. In terms of biological role, bifunctional enzyme catalyzing the last two steps of de novo pyrimidine biosynthesis, orotate phosphoribosyltransferase (OPRT), which converts orotate to orotidine-5'-monophosphate (OMP), and orotidine-5'-monophosphate decarboxylase (ODC), the terminal enzymatic reaction that decarboxylates OMP to uridine monophosphate (UMP). This chain is Uridine 5'-monophosphate synthase (UMPS), found in Bos taurus (Bovine).